A 212-amino-acid polypeptide reads, in one-letter code: Redox-sensing transcriptional repressor Rex (212 aa).

Residues 18–57 (LYYRFVNTLKSKGIDRVNSKAISEALNIESATIRRDFSYF) constitute a DNA-binding region (H-T-H motif). 92–97 (GVGNLG) provides a ligand contact to NAD(+).

This sequence belongs to the transcriptional regulatory Rex family. As to quaternary structure, homodimer.

The protein resides in the cytoplasm. In terms of biological role, modulates transcription in response to changes in cellular NADH/NAD(+) redox state. This chain is Redox-sensing transcriptional repressor Rex, found in Staphylococcus haemolyticus (strain JCSC1435).